We begin with the raw amino-acid sequence, 294 residues long: NAD kinase (294 aa).

Asp74 functions as the Proton acceptor in the catalytic mechanism. NAD(+)-binding positions include 74-75 (DG), 148-149 (NE), His159, Arg176, Asp178, 189-194 (TAYSLS), and Gln249.

The protein belongs to the NAD kinase family. Requires a divalent metal cation as cofactor.

It is found in the cytoplasm. It carries out the reaction NAD(+) + ATP = ADP + NADP(+) + H(+). Functionally, involved in the regulation of the intracellular balance of NAD and NADP, and is a key enzyme in the biosynthesis of NADP. Catalyzes specifically the phosphorylation on 2'-hydroxyl of the adenosine moiety of NAD to yield NADP. The polypeptide is NAD kinase (Vibrio vulnificus (strain CMCP6)).